We begin with the raw amino-acid sequence, 78 residues long: MSRVCQVTGKRPVTGNNRSHALNATKRRFLPNLHSHRFWVESEKRFVTLRVSAKGMRIIDKKGIETVLSELRARGEKY.

Belongs to the bacterial ribosomal protein bL28 family.

This is Large ribosomal subunit protein bL28 from Salmonella choleraesuis (strain SC-B67).